Reading from the N-terminus, the 290-residue chain is MTNKDNTVEDLEQFIAPPAAENLNLEARNLDFYYGTHQTLFNVSLPVERNKITALIGPSGCGKSTLLRILNRIYALYPQQYAVGRVLLDGKDILTDHDTLTRLKERGDNVTLDPLGDDISQIRARIGMVFQKPTPFPMSIYDNVAYGVRLHFNKSRQELDHIVERSLHRAALWDEVKDKLKESGLSLSGGQQQRLCVARGLAVEPEVLLLDEPASALDPVSTARLEETLMELKKDLSIVIVTHNLQQAARISDYTGFMYLGNMIEFCSTDRLFARPKTRRARDYLTGRFG.

In terms of domain architecture, ABC transporter spans 25–285; the sequence is LEARNLDFYY…PKTRRARDYL (261 aa). ATP is bound at residue 57 to 64; the sequence is GPSGCGKS.

It belongs to the ABC transporter superfamily. Phosphate importer (TC 3.A.1.7) family. As to quaternary structure, the complex is composed of two ATP-binding proteins (PstB), two transmembrane proteins (PstC and PstA) and a solute-binding protein (PstS).

It is found in the cell inner membrane. The enzyme catalyses phosphate(out) + ATP + H2O = ADP + 2 phosphate(in) + H(+). Part of the ABC transporter complex PstSACB involved in phosphate import. Responsible for energy coupling to the transport system. This chain is Phosphate import ATP-binding protein PstB, found in Zymomonas mobilis subsp. mobilis (strain ATCC 31821 / ZM4 / CP4).